We begin with the raw amino-acid sequence, 192 residues long: Transcription termination/antitermination protein NusG (192 aa).

Positions 140 to 168 (VGEIVIVTDGPFETFTGTVEEIDQEKNRL) constitute a KOW domain.

It belongs to the NusG family.

Participates in transcription elongation, termination and antitermination. The chain is Transcription termination/antitermination protein NusG from Rickettsia felis (strain ATCC VR-1525 / URRWXCal2) (Rickettsia azadi).